The chain runs to 55 residues: Large ribosomal subunit protein bL33 (55 aa).

This sequence belongs to the bacterial ribosomal protein bL33 family.

The sequence is that of Large ribosomal subunit protein bL33 from Mesorhizobium japonicum (strain LMG 29417 / CECT 9101 / MAFF 303099) (Mesorhizobium loti (strain MAFF 303099)).